The sequence spans 105 residues: Large ribosomal subunit protein uL24 (105 aa).

The protein belongs to the universal ribosomal protein uL24 family. Part of the 50S ribosomal subunit.

Functionally, one of two assembly initiator proteins, it binds directly to the 5'-end of the 23S rRNA, where it nucleates assembly of the 50S subunit. Its function is as follows. One of the proteins that surrounds the polypeptide exit tunnel on the outside of the subunit. This Mycobacterium tuberculosis (strain CDC 1551 / Oshkosh) protein is Large ribosomal subunit protein uL24.